Here is a 344-residue protein sequence, read N- to C-terminus: Probable dual-specificity RNA methyltransferase RlmN (344 aa).

Glutamate 83 (proton acceptor) is an active-site residue. A Radical SAM core domain is found at 89-323; the sequence is YLDRKTICVS…VSVRRSRGKD (235 aa). Cysteine 96 and cysteine 328 are disulfide-bonded. The [4Fe-4S] cluster site is built by cysteine 103, cysteine 107, and cysteine 110. S-adenosyl-L-methionine is bound by residues 153-154, serine 185, 209-211, and asparagine 285; these read GE and SLH. Cysteine 328 serves as the catalytic S-methylcysteine intermediate.

Belongs to the radical SAM superfamily. RlmN family. It depends on [4Fe-4S] cluster as a cofactor.

It is found in the cytoplasm. The enzyme catalyses adenosine(2503) in 23S rRNA + 2 reduced [2Fe-2S]-[ferredoxin] + 2 S-adenosyl-L-methionine = 2-methyladenosine(2503) in 23S rRNA + 5'-deoxyadenosine + L-methionine + 2 oxidized [2Fe-2S]-[ferredoxin] + S-adenosyl-L-homocysteine. It carries out the reaction adenosine(37) in tRNA + 2 reduced [2Fe-2S]-[ferredoxin] + 2 S-adenosyl-L-methionine = 2-methyladenosine(37) in tRNA + 5'-deoxyadenosine + L-methionine + 2 oxidized [2Fe-2S]-[ferredoxin] + S-adenosyl-L-homocysteine. Its function is as follows. Specifically methylates position 2 of adenine 2503 in 23S rRNA and position 2 of adenine 37 in tRNAs. The protein is Probable dual-specificity RNA methyltransferase RlmN of Deinococcus geothermalis (strain DSM 11300 / CIP 105573 / AG-3a).